Reading from the N-terminus, the 151-residue chain is Large ribosomal subunit protein uL15 (151 aa).

The segment at 1 to 62 (MVKLNELFPK…GGQMPLYRRV (62 aa)) is disordered. The span at 11–20 (HGSRKAKRRI) shows a compositional bias: basic residues.

Belongs to the universal ribosomal protein uL15 family. In terms of assembly, part of the 50S ribosomal subunit.

Its function is as follows. Binds to the 23S rRNA. The chain is Large ribosomal subunit protein uL15 from Elusimicrobium minutum (strain Pei191).